The chain runs to 183 residues: Adenine phosphoribosyltransferase (183 aa).

It belongs to the purine/pyrimidine phosphoribosyltransferase family. Homodimer.

The protein resides in the cytoplasm. The enzyme catalyses AMP + diphosphate = 5-phospho-alpha-D-ribose 1-diphosphate + adenine. Its pathway is purine metabolism; AMP biosynthesis via salvage pathway; AMP from adenine: step 1/1. In terms of biological role, catalyzes a salvage reaction resulting in the formation of AMP, that is energically less costly than de novo synthesis. The chain is Adenine phosphoribosyltransferase from Escherichia coli (strain K12 / MC4100 / BW2952).